Here is an 893-residue protein sequence, read N- to C-terminus: Dystroglycan 1 (893 aa).

The signal sequence occupies residues 1–27; sequence MSVDNWLLHPLWGQTFLLLLSVAVAQA. The tract at residues 28-406 is required for laminin recognition; it reads HWPSEPSEAV…GQIRPTLTIP (379 aa). The segment at 47–69 is O-glycosylated at one site; it reads SMHSVLSDFQEAVPTVVGIPDGT. N139 is a glycosylation site (N-linked (GlcNAc...) asparagine). C180 and C262 are joined by a disulfide. Residues 314–483 form a mucin-like domain region; sequence ATPTPVTAIG…PPTRIRTTTS (170 aa). O-linked (Man6P...) threonine glycosylation is found at T315, T317, and T377. Residues 379–498 form a disordered region; sequence TLGPIQPTRV…GEPNQRPELK (120 aa). The segment covering 409–445 has biased composition (low complexity); the sequence is VEPTAVITPPTTTTKKPRVSTPKPATPSTDSSTTTTR. The tract at residues 461-483 is O-glycosylated at seven sites with GalNAc; it reads TTKAPITRLETASPPTRIRTTTS. The Peptidase S72 domain maps to 601 to 710; it reads KAPARFKARL…LSIAVTGSGS (110 aa). N-linked (GlcNAc...) asparagine glycosylation is found at N639, N647, and N659. The Extracellular segment spans residues 652–751; it reads SIVVEWTNNT…SSEDDVYLHT (100 aa). Residues C667 and C711 are joined by a disulfide bond. Residues 722–744 form a disordered region; the sequence is PSPGSSAAPATEVPDRDPEKSSE. The segment covering 734–744 has biased composition (basic and acidic residues); it reads VPDRDPEKSSE. The helical transmembrane segment at 752-772 threads the bilayer; that stretch reads VIPAVVVAAILLIAGIIAMIC. At 773 to 893 the chain is on the cytoplasmic side; sequence YRKKRKGKLT…YRSPPPYVPP (121 aa). The short motif at 774–780 is the Nuclear localization signal element; it reads RKKRKGK. Position 788 is a phosphothreonine (T788). Residues 817–893 form a required for interaction with CAV3 region; it reads LQEEKAPLPP…YRSPPPYVPP (77 aa). A disordered region spans residues 821–893; the sequence is KAPLPPPEYP…YRSPPPYVPP (73 aa). A compositionally biased stretch (polar residues) spans 830–844; the sequence is PNQSMPETTPLNQDT. Pro residues predominate over residues 857–868; sequence NAPPYQPPPPFT. The tract at residues 878-893 is required for binding DMD and UTRN; the sequence is PKNMTPYRSPPPYVPP. The short motif at 887–890 is the PPXY motif element; it reads PPPY. The residue at position 890 (Y890) is a Phosphotyrosine; by SRC.

As to quaternary structure, monomer. Heterodimer of alpha- and beta-dystroglycan subunits which are the central components of the dystrophin-glycoprotein complex. This complex then can form a dystrophin-associated glycoprotein complex (DGC) which is composed of three subcomplexes: a cytoplasmic complex comprised of DMD (or UTRN), DTNA and a number of syntrophins, such as SNTB1, SNTB2, SNTG1 and SNTG2, the transmembrane dystroglycan complex, and the sarcoglycan-sarcospan complex. Interacts (via the N-terminal of alphaDAG1) with LARGE1; the interaction enhances laminin binding. Interacts with SGCD. Interacts with AGR2 and AGR3. Interacts (betaDAG1) with DMD; the interaction is inhibited by phosphorylation on the PPXY motif. Interacts (betaDAG1, via its PPXY motif) with UTRN (via its WWW and ZZ domains); the interaction is inhibited by phosphorylation on the PPXY motif. Interacts (betaDAG1, via its phosphorylated PPXY motif) with the SH2 domain-containing proteins, FYN, CSK, NCK and SHC. Interacts (betaDAG1) with CAV3 (via a central WW-like domain); the interaction disrupts the binding of DMD. BetaDAG1 directly interacts with ANK3, but not with ANK2; this interaction does not interfere with DMD-binding and is required for retention at costameres. Identified in a dystroglycan complex that contains at least PRX, DRP2, UTRN, DMD and DAG1. Interacts with POMGNT1. BetaDAG1 interacts with CD93. O-glycosylated. POMGNT1 catalyzes the initial addition of N-acetylglucosamine, giving rise to the GlcNAc(beta1-2)Man(alpha1-)O-Ser/Thr moiety and thus providing the necessary basis for the addition of further carbohydrate moieties. Heavily O-glycosylated comprising of up to two thirds of its mass and the carbohydrate composition differs depending on tissue type. Mucin-type O-glycosylation is important for ligand binding activity. O-mannosylation is found in high abundance in both brain and muscle where the most abundant glycan is Sia-alpha-2-3-Gal-beta-1-4-Glc-NAc-beta-1-2-Man. In muscle, glycosylation on Thr-315, Thr-317, Thr-379 by a phosphorylated O-mannosyl glycan with the structure 2-(N-acetylamido)-2-deoxygalactosyl-beta-1,3-2-(N-acetylamido)-2-deoxyglucosyl-beta-1,4-6-phosphomannose is mediated by like-acetylglucosaminyltransferase (LARGE1) protein amd is required for laminin binding. O-glycosylated in the N-terminal region with a core 1 or possibly core 8 glycan. The brain form displays a unique glycosylation pattern which is absent in other tissues; this form shows enhanced binding to laminin LAMA5 compared to the skeletal muscle form. In terms of processing, N-glycosylated. Post-translationally, autolytic cleavage produces the alpha and beta subunits. In cutaneous cells, as well as in certain pathological conditions, shedding of beta-dystroglycan can occur releasing a peptide of about 30 kDa. SRC-mediated phosphorylation of the PPXY motif of the beta subunit recruits SH2 domain-containing proteins, but inhibits binding to WWW domain-containing proteins, DMD and UTRN. This phosphorylation also inhibits nuclear entry. Detected in brain and kidney (at protein level). Detected in sciatic nerve (at protein level). Expressed in neurons and muscle cells (at protein level). Expressed in a variety of tissues. In brain, expressed in the hippocampal formation, the olfactory bulb, the cerebellum and the thalamus. In the peripheral nerve system, expressed in Schwann cells.

It localises to the secreted. The protein resides in the extracellular space. The protein localises to the cell membrane. It is found in the cytoplasm. Its subcellular location is the cytoskeleton. It localises to the nucleus. The protein resides in the nucleoplasm. The protein localises to the sarcolemma. It is found in the postsynaptic cell membrane. The dystroglycan complex is involved in a number of processes including laminin and basement membrane assembly, sarcolemmal stability, cell survival, peripheral nerve myelination, nodal structure, cell migration, and epithelial polarization. Its function is as follows. Extracellular peripheral glycoprotein that acts as a receptor for extracellular matrix proteins containing laminin-G domains, and for certain adenoviruses. Receptor for laminin-2 (LAMA2) and agrin in peripheral nerve Schwann cells. Also acts as a receptor for laminin LAMA5. Functionally, transmembrane protein that plays important roles in connecting the extracellular matrix to the cytoskeleton. Acts as a cell adhesion receptor in both muscle and non-muscle tissues. Receptor for both DMD and UTRN and, through these interactions, scaffolds axin to the cytoskeleton. Also functions in cell adhesion-mediated signaling and implicated in cell polarity. This Mus musculus (Mouse) protein is Dystroglycan 1.